A 239-amino-acid chain; its full sequence is Ribonuclease PH (239 aa).

Phosphate contacts are provided by residues Arg86 and 124 to 126 (GTR).

The protein belongs to the RNase PH family. In terms of assembly, homohexameric ring arranged as a trimer of dimers.

The enzyme catalyses tRNA(n+1) + phosphate = tRNA(n) + a ribonucleoside 5'-diphosphate. Its function is as follows. Phosphorolytic 3'-5' exoribonuclease that plays an important role in tRNA 3'-end maturation. Removes nucleotide residues following the 3'-CCA terminus of tRNAs; can also add nucleotides to the ends of RNA molecules by using nucleoside diphosphates as substrates, but this may not be physiologically important. Probably plays a role in initiation of 16S rRNA degradation (leading to ribosome degradation) during starvation. This is Ribonuclease PH from Cupriavidus taiwanensis (strain DSM 17343 / BCRC 17206 / CCUG 44338 / CIP 107171 / LMG 19424 / R1) (Ralstonia taiwanensis (strain LMG 19424)).